A 335-amino-acid chain; its full sequence is Beta-hexosaminidase (335 aa).

Residues Asp60, Arg68, Arg133, and 163-164 each bind substrate; that span reads KH. His176 functions as the Proton donor/acceptor in the catalytic mechanism. The active-site Nucleophile is the Asp247.

This sequence belongs to the glycosyl hydrolase 3 family. NagZ subfamily. Monomer.

The protein resides in the cytoplasm. The enzyme catalyses Hydrolysis of terminal non-reducing N-acetyl-D-hexosamine residues in N-acetyl-beta-D-hexosaminides.. It functions in the pathway cell wall biogenesis; peptidoglycan recycling. Functionally, plays a role in peptidoglycan recycling by cleaving the terminal beta-1,4-linked N-acetylglucosamine (GlcNAc) from peptide-linked peptidoglycan fragments, giving rise to free GlcNAc, anhydro-N-acetylmuramic acid and anhydro-N-acetylmuramic acid-linked peptides. This is Beta-hexosaminidase from Xylella fastidiosa (strain 9a5c).